Consider the following 274-residue polypeptide: Kit ligand (274 aa).

Residues 1 to 25 (MKKTQTWIITCIYLQLLLFNPLVRT) form the signal peptide. The residue at position 26 (Q26) is a Pyrrolidone carboxylic acid. The Extracellular segment spans residues 26 to 215 (QGICRNRVTD…SDSIEDSSLQ (190 aa)). Intrachain disulfides connect C29–C114 and C68–C164. N90, N97, N145, and N196 each carry an N-linked (GlcNAc...) asparagine glycan. A helical membrane pass occupies residues 216 to 238 (WAAVALPAFFSLVIGFAFGALYW). The Cytoplasmic portion of the chain corresponds to 239–274 (KKKQPNLTRTVENIQINEEDNEISMLQEKEREFQEV).

It belongs to the SCF family. In terms of assembly, homodimer, non-covalently linked. Heterotetramer with KIT, binding two KIT molecules; thereby mediates KIT dimerization and subsequent activation by autophosphorylation. A soluble form is produced by proteolytic processing of the extracellular domain.

It localises to the cytoplasm. The protein resides in the cytoskeleton. Its subcellular location is the cell membrane. It is found in the cell projection. The protein localises to the lamellipodium. It localises to the filopodium. The protein resides in the secreted. Ligand for the receptor-type protein-tyrosine kinase KIT. Plays an essential role in the regulation of cell survival and proliferation, hematopoiesis, stem cell maintenance, gametogenesis, mast cell development, migration and function, and in melanogenesis. KITLG/SCF binding can activate several signaling pathways. Promotes phosphorylation of PIK3R1, the regulatory subunit of phosphatidylinositol 3-kinase, and subsequent activation of the kinase AKT1. KITLG/SCF and KIT also transmit signals via GRB2 and activation of RAS, RAF1 and the MAP kinases MAPK1/ERK2 and/or MAPK3/ERK1. KITLG/SCF and KIT promote activation of STAT family members STAT1, STAT3 and STAT5. KITLG/SCF and KIT promote activation of PLCG1, leading to the production of the cellular signaling molecules diacylglycerol and inositol 1,4,5-trisphosphate. KITLG/SCF acts synergistically with other cytokines, probably interleukins. The sequence is that of Kit ligand (KITLG) from Sus scrofa (Pig).